Consider the following 120-residue polypeptide: MLNLDNQKAIDNLHKNFIKPNLPKIQIGDTVKLGVKIIEGNKERVQFYEGTVIAKKNSSINTTITVRKVLQGIGIERIFLIHSPKIASIEVLRHSKVRRSKLYYLRNLRGKASRLKQRFE.

It belongs to the bacterial ribosomal protein bL19 family.

The protein resides in the plastid. The protein localises to the chloroplast. The chain is Large ribosomal subunit protein bL19c from Thalassiosira weissflogii (Marine diatom).